The following is a 503-amino-acid chain: Probable cytosol aminopeptidase (503 aa).

Residues K270 and D275 each coordinate Mn(2+). K282 is a catalytic residue. Mn(2+)-binding residues include D293, D352, and E354. R356 is a catalytic residue.

Belongs to the peptidase M17 family. Mn(2+) serves as cofactor.

The protein localises to the cytoplasm. The catalysed reaction is Release of an N-terminal amino acid, Xaa-|-Yaa-, in which Xaa is preferably Leu, but may be other amino acids including Pro although not Arg or Lys, and Yaa may be Pro. Amino acid amides and methyl esters are also readily hydrolyzed, but rates on arylamides are exceedingly low.. It carries out the reaction Release of an N-terminal amino acid, preferentially leucine, but not glutamic or aspartic acids.. In terms of biological role, presumably involved in the processing and regular turnover of intracellular proteins. Catalyzes the removal of unsubstituted N-terminal amino acids from various peptides. The polypeptide is Probable cytosol aminopeptidase (Shigella dysenteriae serotype 1 (strain Sd197)).